A 522-amino-acid chain; its full sequence is MSFSRSAADPADTLPDLAATLAAPDTHAFLRLGDAFHTRLPAAPLAAPYVVGFSDEVARLLGLPASLAAQPGFAELFAGNPTRDWPAEALPYASVYSGHQFGVWAGQLGDGRALTIGELPGTDGRRYELQLKGSGRTPYSRMGDGRAVLRSSIREFLCSEAMHHLGIPTTRALTVIGSDQPVVREEIETAAVVTRVSESFVRFGHFEHFFSNNRPDLLRALADHVIDRFYPACRDADDPYLALLEAATRRTAELVAQWQAVGFCHGVMNTDNMSILGVTIDYGPFGFVDAFDANHICNHSDTGGRYAYRMQPRIAHWNCYCLAQALLPLIGLQHGIADDDARAERAVDDAQAVLATFPERFGPALERAMRAKLGLALERDGDAALANQLLETMHASRADFTLTFRRLAQLSKHDASRDAPVRDLFIDREAFDAWANLYRARLSEETRDDAARAAAMNRVNPKYVLRNHLAELAIRRAKEKDFSEVERLAQVLRRPFDEQPEHESYAALPPDWAGSLEVSCSS.

ATP contacts are provided by Gly-109, Gly-111, Arg-112, Lys-132, Asp-144, Gly-145, Arg-195, and Arg-202. The active-site Proton acceptor is Asp-271. 2 residues coordinate Mg(2+): Asn-272 and Asp-281. Asp-281 contacts ATP.

This sequence belongs to the SELO family. It depends on Mg(2+) as a cofactor. Mn(2+) serves as cofactor.

The catalysed reaction is L-seryl-[protein] + ATP = 3-O-(5'-adenylyl)-L-seryl-[protein] + diphosphate. It carries out the reaction L-threonyl-[protein] + ATP = 3-O-(5'-adenylyl)-L-threonyl-[protein] + diphosphate. The enzyme catalyses L-tyrosyl-[protein] + ATP = O-(5'-adenylyl)-L-tyrosyl-[protein] + diphosphate. It catalyses the reaction L-histidyl-[protein] + UTP = N(tele)-(5'-uridylyl)-L-histidyl-[protein] + diphosphate. The catalysed reaction is L-seryl-[protein] + UTP = O-(5'-uridylyl)-L-seryl-[protein] + diphosphate. It carries out the reaction L-tyrosyl-[protein] + UTP = O-(5'-uridylyl)-L-tyrosyl-[protein] + diphosphate. In terms of biological role, nucleotidyltransferase involved in the post-translational modification of proteins. It can catalyze the addition of adenosine monophosphate (AMP) or uridine monophosphate (UMP) to a protein, resulting in modifications known as AMPylation and UMPylation. In Burkholderia multivorans (strain ATCC 17616 / 249), this protein is Protein nucleotidyltransferase YdiU.